A 238-amino-acid polypeptide reads, in one-letter code: CD209 antigen-like protein A (238 aa).

Residues 1-51 (MSDSKEMGKRQLRPLDEELLTSSHTRHSIKGFGFQTNSGFSSFTGCLVHSQ) lie on the Cytoplasmic side of the membrane. Residues 52-72 (VPLALQVLFLAVCSVLLVVIL) traverse the membrane as a helical; Signal-anchor for type II membrane protein segment. At 73–238 (VKVYKIPSSQ…KKLSTSCPSK (166 aa)) the chain is on the extracellular side. C108 and C119 are disulfide-bonded. A C-type lectin domain is found at 115–229 (FQGSCYFFSV…CTNKKFWICK (115 aa)). N-linked (GlcNAc...) asparagine glycosylation occurs at N130. 2 disulfides stabilise this stretch: C136–C228 and C207–C220. Residues E198, N200, L202, E205, N216, and D217 each coordinate Ca(2+). Residue N216 is glycosylated (N-linked (GlcNAc...) asparagine).

Predominantly expressed in dendritic cells. Detected at very low levels in lung, spleen, lymph nodes and bone marrow.

The protein resides in the membrane. In terms of biological role, probable pathogen-recognition receptor. May mediate the endocytosis of pathogens which are subsequently degraded in lysosomal compartments. May recognize in a calcium-dependent manner high mannose N-linked oligosaccharides in a variety of pathogen antigens. The protein is CD209 antigen-like protein A (Cd209a) of Mus musculus (Mouse).